The primary structure comprises 296 residues: MNQEQFDKIKNGKGFIAALDQSGGSTPKALKDYGVEENEYSNDEEMFNLVHDMRTRIITSPAFNGEKILGAILFEQTMDREVEGKYTGSYLADKGIVPFLKVDKGLAEEADGVQLMKPIPDLDKLLDRANERGIFGTKMRSNILENNKEAIEKVVKQQFEVAKEIIAAGLVPIIEPEVNINAKDKEAIEANLAEAIKAELDNLKKDQYVMLKLTIPTKVNAYSELIEHPQVIRVVALSGGYSRDEANKILKQNDGLIASFSRALVSDLNAQQSDAEFNEKLQEAIDTIFDASVNKA.

Glu175 functions as the Proton acceptor in the catalytic mechanism. Lys212 acts as the Schiff-base intermediate with dihydroxyacetone-P in catalysis.

Belongs to the class I fructose-bisphosphate aldolase family.

The enzyme catalyses beta-D-fructose 1,6-bisphosphate = D-glyceraldehyde 3-phosphate + dihydroxyacetone phosphate. The protein operates within carbohydrate degradation; glycolysis; D-glyceraldehyde 3-phosphate and glycerone phosphate from D-glucose: step 4/4. This Staphylococcus carnosus (strain TM300) protein is Fructose-bisphosphate aldolase class 1 (fda).